We begin with the raw amino-acid sequence, 449 residues long: D-inositol 3-phosphate glycosyltransferase (449 aa).

His-43 is a binding site for 1D-myo-inositol 3-phosphate. Residues 49–50 (QP) and Gly-57 each bind UDP-N-acetyl-alpha-D-glucosamine. Residues 54–59 (DAGGMN), Lys-112, Tyr-145, Thr-169, and Arg-189 contribute to the 1D-myo-inositol 3-phosphate site. Residues Arg-263, Lys-268, and Gln-324 each contribute to the UDP-N-acetyl-alpha-D-glucosamine site. Residues Tyr-333, Arg-334, and Ala-336 each coordinate Mg(2+). The UDP-N-acetyl-alpha-D-glucosamine site is built by Glu-346 and Glu-354. Thr-360 serves as a coordination point for Mg(2+).

Belongs to the glycosyltransferase group 1 family. MshA subfamily. As to quaternary structure, homodimer.

It catalyses the reaction 1D-myo-inositol 3-phosphate + UDP-N-acetyl-alpha-D-glucosamine = 1D-myo-inositol 2-acetamido-2-deoxy-alpha-D-glucopyranoside 3-phosphate + UDP + H(+). Its function is as follows. Catalyzes the transfer of a N-acetyl-glucosamine moiety to 1D-myo-inositol 3-phosphate to produce 1D-myo-inositol 2-acetamido-2-deoxy-glucopyranoside 3-phosphate in the mycothiol biosynthesis pathway. In Segniliparus rotundus (strain ATCC BAA-972 / CDC 1076 / CIP 108378 / DSM 44985 / JCM 13578), this protein is D-inositol 3-phosphate glycosyltransferase.